The following is a 116-amino-acid chain: Protein Wnt-5a (116 aa).

Serine 1 carries O-palmitoleoyl serine; by PORCN lipidation. Asparagine 69 and asparagine 83 each carry an N-linked (GlcNAc...) asparagine glycan. A disulfide bridge connects residues cysteine 82 and cysteine 97.

The protein belongs to the Wnt family. Palmitoleoylation is required for efficient binding to frizzled receptors. Depalmitoleoylation leads to Wnt signaling pathway inhibition.

Its subcellular location is the secreted. The protein resides in the extracellular space. The protein localises to the extracellular matrix. Functionally, ligand for members of the frizzled family of seven transmembrane receptors. Can activate or inhibit canonical Wnt signaling, depending on receptor context. Required during embryogenesis for extension of the primary anterior-posterior axis. The chain is Protein Wnt-5a (WNT5A) from Meleagris gallopavo (Wild turkey).